Reading from the N-terminus, the 899-residue chain is Bifunctional uridylyltransferase/uridylyl-removing enzyme (899 aa).

The interval 1 to 342 (MPQMDPELFD…RAGESGPATP (342 aa)) is uridylyltransferase. The tract at residues 343-705 (LNSRFQVRDG…TTQREFEGGT (363 aa)) is uridylyl-removing. The region spanning 461-583 (VDAHTLNLIK…VGDQTHLDYL (123 aa)) is the HD domain. ACT domains are found at residues 706 to 784 (QIFI…DEYP) and 816 to 897 (ILEL…SLQI).

The protein belongs to the GlnD family. Mg(2+) is required as a cofactor.

It carries out the reaction [protein-PII]-L-tyrosine + UTP = [protein-PII]-uridylyl-L-tyrosine + diphosphate. The enzyme catalyses [protein-PII]-uridylyl-L-tyrosine + H2O = [protein-PII]-L-tyrosine + UMP + H(+). Its activity is regulated as follows. Uridylyltransferase (UTase) activity is inhibited by glutamine, while glutamine activates uridylyl-removing (UR) activity. Its function is as follows. Modifies, by uridylylation and deuridylylation, the PII regulatory proteins (GlnB and homologs), in response to the nitrogen status of the cell that GlnD senses through the glutamine level. Under low glutamine levels, catalyzes the conversion of the PII proteins and UTP to PII-UMP and PPi, while under higher glutamine levels, GlnD hydrolyzes PII-UMP to PII and UMP (deuridylylation). Thus, controls uridylylation state and activity of the PII proteins, and plays an important role in the regulation of nitrogen assimilation and metabolism. The polypeptide is Bifunctional uridylyltransferase/uridylyl-removing enzyme (Ectopseudomonas mendocina (strain ymp) (Pseudomonas mendocina)).